Here is a 307-residue protein sequence, read N- to C-terminus: Elongation factor Ts (307 aa).

The segment at 80 to 83 is involved in Mg(2+) ion dislocation from EF-Tu; it reads TDFV.

It belongs to the EF-Ts family.

It is found in the cytoplasm. Functionally, associates with the EF-Tu.GDP complex and induces the exchange of GDP to GTP. It remains bound to the aminoacyl-tRNA.EF-Tu.GTP complex up to the GTP hydrolysis stage on the ribosome. This chain is Elongation factor Ts (tsf), found in Zymomonas mobilis subsp. mobilis (strain ATCC 31821 / ZM4 / CP4).